A 213-amino-acid polypeptide reads, in one-letter code: Pyrrolidone-carboxylate peptidase (213 aa).

Residues Glu-78, Cys-141, and His-165 contribute to the active site.

Belongs to the peptidase C15 family. As to quaternary structure, homotetramer.

The protein resides in the cytoplasm. The catalysed reaction is Release of an N-terminal pyroglutamyl group from a polypeptide, the second amino acid generally not being Pro.. In terms of biological role, removes 5-oxoproline from various penultimate amino acid residues except L-proline. The chain is Pyrrolidone-carboxylate peptidase from Finegoldia magna (strain ATCC 29328 / DSM 20472 / WAL 2508) (Peptostreptococcus magnus).